A 224-amino-acid chain; its full sequence is Cytidylate kinase (224 aa).

11–19 (GPAGAGKST) is an ATP binding site.

It belongs to the cytidylate kinase family. Type 1 subfamily.

It localises to the cytoplasm. It catalyses the reaction CMP + ATP = CDP + ADP. The enzyme catalyses dCMP + ATP = dCDP + ADP. This Exiguobacterium sp. (strain ATCC BAA-1283 / AT1b) protein is Cytidylate kinase.